The following is a 697-amino-acid chain: Histone-lysine N-methyltransferase SETDB2 (697 aa).

One can recognise an MBD domain in the interval 172–242; sequence LKKENPLNLP…DNFSFSTQVQ (71 aa). The region spanning 304 to 378 is the Pre-SET domain; it reads KCCSCTDGCL…LCQNRVVQHG (75 aa). The Zn(2+) site is built by cysteine 306, cysteine 308, cysteine 312, cysteine 318, cysteine 320, cysteine 359, cysteine 363, cysteine 365, and cysteine 370. In terms of domain architecture, SET spans 381–672; it reads LRLQVFKTDT…AGTELTWDYN (292 aa). Position 391–393 (391–393) interacts with S-adenosyl-L-methionine; it reads KGW. 2 disordered regions span residues 438–461 and 529–605; these read KEDN…HSDS and VHNS…STSP. Residues 565–581 show a composition bias toward low complexity; it reads SGYVSEESSSSVISGGH. S-adenosyl-L-methionine is bound by residues arginine 626 and 629–630; that span reads NH. 4 residues coordinate Zn(2+): cysteine 632, cysteine 685, cysteine 687, and cysteine 692.

The protein belongs to the class V-like SAM-binding methyltransferase superfamily.

It localises to the nucleus. The protein localises to the chromosome. The enzyme catalyses N(6),N(6)-dimethyl-L-lysyl(9)-[histone H3] + S-adenosyl-L-methionine = N(6),N(6),N(6)-trimethyl-L-lysyl(9)-[histone H3] + S-adenosyl-L-homocysteine + H(+). In terms of biological role, histone methyltransferase involved in left-right axis specification in early development and mitosis. Specifically trimethylates 'Lys-9' of histone H3 (H3K9me3). H3K9me3 represents a specific tag for epigenetic transcriptional repression by recruiting HP1 (CBX1, CBX3 and/or CBX5) proteins to methylated histones. Contributes to H3K9me3 in both the interspersed repetitive elements and centromere-associated repeats. Plays a role in chromosome condensation and segregation during mitosis. The protein is Histone-lysine N-methyltransferase SETDB2 (setdb2) of Xenopus tropicalis (Western clawed frog).